A 211-amino-acid polypeptide reads, in one-letter code: Nitrogen fixation regulation protein FixK (211 aa).

The HTH crp-type domain occupies 134–204 (QCAVERIAAF…ARTIDIMKPE (71 aa)). A DNA-binding region (H-T-H motif) is located at residues 163-182 (RQDIADYLGLTIETVSRVVT).

In terms of biological role, fixK is a protein that regulates nitrogen fixation genes both positively and negatively. FixK appears to repress its own expression and that of nifA. FixK may bind DNA at the FNR consensus binding site. The chain is Nitrogen fixation regulation protein FixK (fixK) from Rhizobium meliloti (strain 1021) (Ensifer meliloti).